The chain runs to 629 residues: uncharacterized protein (629 aa).

Histidine 562 serves as the catalytic Proton acceptor.

Belongs to the GMC oxidoreductase family. The cofactor is FAD.

This is an uncharacterized protein from Mycobacterium tuberculosis (strain CDC 1551 / Oshkosh).